A 436-amino-acid chain; its full sequence is Retinoic acid receptor RXR (436 aa).

Positions 1–108 are disordered; sequence MDRSEGMDTL…GPSPSPGLPH (108 aa). The segment at 1–116 is modulating; the sequence is MDRSEGMDTL…PHSSLHTKHI (116 aa). Residues 13-22 are compositionally biased toward low complexity; it reads SMPSGMSMGM. 2 stretches are compositionally biased toward polar residues: residues 40–49 and 62–76; these read SSLTSPTSTH and MASS…QQMH. The span at 85–98 shows a compositional bias: low complexity; the sequence is SSMGSPPMLCLSPS. 2 consecutive NR C4-type zinc fingers follow at residues 117 to 137 and 153 to 172; these read CAIC…CEGC and CRDD…CQYC. Positions 117–182 form a DNA-binding region, nuclear receptor; the sequence is CAICGDRASG…RYMKCLSMGM (66 aa). The tract at residues 183 to 206 is hinge; it reads KREAVQEERQRVKEKGDGEVESTS. The segment covering 189-200 has biased composition (basic and acidic residues); that stretch reads EERQRVKEKGDG. Residues 189–209 form a disordered region; that stretch reads EERQRVKEKGDGEVESTSGAN. One can recognise an NR LBD domain in the interval 209 to 432; the sequence is NNDMPVEQIL…TFLMEMLENP (224 aa). Arg290 and Ala301 together coordinate 9-cis-retinoate.

It belongs to the nuclear hormone receptor family. NR2 subfamily. In terms of assembly, homodimer (via ligand-binding domain). Heterodimer. Homotetramer consisting of 2 canonical homodimers. Within the tetramer, each monomer binds one molecule of 9C-RA and a NCOA1-derived peptide containing an L-X(2)-L-L motif.

Its subcellular location is the nucleus. In terms of biological role, ligand-dependent transcription factor probably involved in the retinoic acid response pathway. Binds 9-cis-retinoic acid (9C-RA) and, to a lesser extent, docosahexaenoic acid (DHA), phytanic acid, methoprene acid and oleic acid. Binds to double-stranded DNA sequences containing direct repeats (DR) with the consensus sequence 5'-[AG]GGTCA-3' and 1, 2, 3, 4 or 5 nucleotides in between (DR1, DR2, DR3. DR4 and DR5, respectively). Binding to DR1 is strongest. Transactivates gene expression when 9C-RA or DHA is bound. This chain is Retinoic acid receptor RXR, found in Biomphalaria glabrata (Bloodfluke planorb).